Reading from the N-terminus, the 354-residue chain is Threonine synthase (354 aa).

K61 is modified (N6-(pyridoxal phosphate)lysine). Pyridoxal 5'-phosphate contacts are provided by residues N87, 187–191 (GNAGN), and T316.

Belongs to the threonine synthase family. It depends on pyridoxal 5'-phosphate as a cofactor.

It catalyses the reaction O-phospho-L-homoserine + H2O = L-threonine + phosphate. Its pathway is amino-acid biosynthesis; L-threonine biosynthesis; L-threonine from L-aspartate: step 5/5. Functionally, catalyzes the gamma-elimination of phosphate from L-phosphohomoserine and the beta-addition of water to produce L-threonine. This chain is Threonine synthase (thrC), found in Halalkalibacterium halodurans (strain ATCC BAA-125 / DSM 18197 / FERM 7344 / JCM 9153 / C-125) (Bacillus halodurans).